The following is a 509-amino-acid chain: Maturase K (509 aa).

Belongs to the intron maturase 2 family. MatK subfamily.

The protein resides in the plastid. The protein localises to the chloroplast. In terms of biological role, usually encoded in the trnK tRNA gene intron. Probably assists in splicing its own and other chloroplast group II introns. This is Maturase K from Nicotiana bigelovii (Bigelov's tobacco).